The sequence spans 604 residues: uncharacterized protein (604 aa).

A signal peptide spans 1–19 (MIVRILLLFIALFTFGVQA).

The protein to H.influenzae HbpA.

This is an uncharacterized protein from Escherichia coli (strain K12).